A 474-amino-acid chain; its full sequence is Transcription factor SOX-4 (474 aa).

Residues 1-10 show a composition bias toward polar residues; sequence MVQQTNNAEN. The segment at 1–58 is disordered; it reads MVQQTNNAENTEALLAGESSDSGAGLELGIASSPTPGSTASTGGKADDPSWCKTPSGH. Low complexity predominate over residues 31 to 44; it reads ASSPTPGSTASTGG. Residues 59-127 constitute a DNA-binding region (HMG box); that stretch reads IKRPMNAFMV…KHMADYPDYK (69 aa). At Lys-95 the chain carries N6-acetyllysine. 3 disordered regions span residues 128-228, 262-286, and 302-416; these read YRPR…GGGK, ARTPSASASASSAASASAALAAPGK, and LGTS…NFES. Over residues 138-149 the composition is skewed to low complexity; sequence NANSSSSAAASS. Positions 158–189 are enriched in gly residues; it reads VGGSGGGGHGGGGGGGSSNAGGGGGGASGGGA. Low complexity-rich tracts occupy residues 266–283, 304–320, 336–354, and 366–396; these read SASASASSAASASAALAA, TSSSPVGGVGAGADPSD, APSLSGRSSAASSPAAGRS, and AASPAPSSAPSHASSSASSHSSSSSSSGSSS. Residues 397-406 are compositionally biased toward acidic residues; the sequence is SDDEFEDDLL. The span at 407 to 416 shows a compositional bias: low complexity; sequence DLNPSSNFES. Residues 426–434 carry the 9aaTAD motif; the sequence is SALDRDLDF.

Interacts with UBE2I. Interacts with HDAC1; interaction inhibits the transcriptional activator activity. Acetylation at Lys-95 by KAT5 promotes the transcription activator activity and is required during myoblast differentiation. Acetylation by KAT5 abolishes the interaction between SOX4 and HDAC1 and switches SOX4 into a transcriptional activator. Testis, brain, and heart.

It is found in the nucleus. Transcriptional activator that binds with high affinity to the T-cell enhancer motif 5'-AACAAAG-3' motif. Required for IL17A-producing Vgamma2-positive gamma-delta T-cell maturation and development, via binding to regulator loci of RORC to modulate expression. Involved in skeletal myoblast differentiation by promoting gene expression of CALD1. The protein is Transcription factor SOX-4 of Homo sapiens (Human).